Reading from the N-terminus, the 422-residue chain is Proline-rich protein 22 (422 aa).

Disordered stretches follow at residues 1-35 (MQHP…PAPT), 306-325 (LCEV…SADD), and 363-422 (EEQP…ATPH). The segment covering 383–400 (GKRKASTAKKGKPGRKAR) has biased composition (basic residues). Residues 413–422 (PREDLGATPH) are compositionally biased toward basic and acidic residues.

In Homo sapiens (Human), this protein is Proline-rich protein 22 (PRR22).